The sequence spans 198 residues: Beta-crystallin A1-2 (198 aa).

The tract at residues 1–13 (MAQINPLPVPLGP) is N-terminal arm. Beta/gamma crystallin 'Greek key' domains lie at 14–53 (WKIT…KVEC) and 54–100 (GAWI…RPIC). The segment at 101–106 (SANHIE) is connecting peptide. Beta/gamma crystallin 'Greek key' domains are found at residues 107 to 148 (SKLV…KVQC) and 149 to 197 (GAWV…RRIQ).

It belongs to the beta/gamma-crystallin family. As to quaternary structure, homo/heterodimer, or complexes of higher-order. The structure of beta-crystallin oligomers seems to be stabilized through interactions between the N-terminal arms. Post-translationally, the N-terminus is blocked.

In terms of biological role, crystallins are the dominant structural components of the vertebrate eye lens. In Aquarana catesbeiana (American bullfrog), this protein is Beta-crystallin A1-2.